The following is a 430-amino-acid chain: Glutamate-1-semialdehyde 2,1-aminomutase (430 aa).

The residue at position 266 (lysine 266) is an N6-(pyridoxal phosphate)lysine.

Belongs to the class-III pyridoxal-phosphate-dependent aminotransferase family. HemL subfamily. Homodimer. Pyridoxal 5'-phosphate serves as cofactor.

The protein resides in the cytoplasm. The enzyme catalyses (S)-4-amino-5-oxopentanoate = 5-aminolevulinate. Its pathway is porphyrin-containing compound metabolism; protoporphyrin-IX biosynthesis; 5-aminolevulinate from L-glutamyl-tRNA(Glu): step 2/2. In Acidithiobacillus ferrooxidans (strain ATCC 23270 / DSM 14882 / CIP 104768 / NCIMB 8455) (Ferrobacillus ferrooxidans (strain ATCC 23270)), this protein is Glutamate-1-semialdehyde 2,1-aminomutase.